Reading from the N-terminus, the 460-residue chain is Elongation factor 1-alpha (460 aa).

A N,N,N-trimethylglycine modification is found at Gly-2. At Lys-3 the chain carries N6,N6-dimethyllysine; alternate. Position 3 is an N6-methyllysine; alternate (Lys-3). In terms of domain architecture, tr-type G spans 6–241 (KTHINLVVIG…DAIDPPTRPT (236 aa)). Positions 15 to 22 (GHVDSGKS) are G1. 15-22 (GHVDSGKS) contacts GTP. Residue Lys-31 is modified to N6-methyllysine. Positions 71–75 (GITID) are G2. Lys-80 bears the N6,N6,N6-trimethyllysine mark. Residues 92–95 (DAPG) form a G3 region. Residues 92 to 96 (DAPGH) and 154 to 157 (NKMD) contribute to the GTP site. The G4 stretch occupies residues 154-157 (NKMD). Residues 193 to 195 (SGF) are G5. Lys-317 carries the post-translational modification N6,N6-dimethyllysine; alternate. Lys-317 carries the N6-methyllysine; alternate modification. An N6-methyllysine modification is found at Lys-391.

Belongs to the TRAFAC class translation factor GTPase superfamily. Classic translation factor GTPase family. EF-Tu/EF-1A subfamily.

It localises to the cytoplasm. In terms of biological role, this protein promotes the GTP-dependent binding of aminoacyl-tRNA to the A-site of ribosomes during protein biosynthesis. In Coccidioides immitis (strain RS) (Valley fever fungus), this protein is Elongation factor 1-alpha (TEF).